The sequence spans 450 residues: Endosomal transmembrane epsin interactor 1 (450 aa).

Residues 1–29 (MILLVNLFVLLSVVCVLLNLAGFILGCQG) form the signal peptide. Residues 30-85 (AQFVSSVPRCDLVDLGEGKICFCCEEFQPAKCTDKENALKLFPVQPCSAVHLLLKK) lie on the Lumenal side of the membrane. Residues 86-106 (VLFALCALNALTTTVCLVAAA) form a helical membrane-spanning segment. Over 107–450 (LRYLQIFATR…LIGVIRETVL (344 aa)) the chain is Cytoplasmic. The tract at residues 107-450 (LRYLQIFATR…LIGVIRETVL (344 aa)) is mediates interaction with EPN1. 2 short sequence motifs (PPxY; mediates interaction with ITCH) span residues 148-151 (PPSY) and 194-197 (PPPY). The segment at 235-284 (DGDIPNIPAEENASTSTPSSTLVRPIRSRRALPPLRTRSKSDPVLHPSEE) is disordered. Polar residues predominate over residues 246–256 (NASTSTPSSTL). Residues 273 to 284 (SKSDPVLHPSEE) are compositionally biased toward basic and acidic residues. Residue lysine 274 forms a Glycyl lysine isopeptide (Lys-Gly) (interchain with G-Cter in ubiquitin) linkage. At serine 275 the chain carries Phosphoserine. Glycyl lysine isopeptide (Lys-Gly) (interchain with G-Cter in ubiquitin) cross-links involve residues lysine 329 and lysine 365.

This sequence belongs to the ENTREP family. In terms of assembly, interacts with ITCH; enhances the ubiquitination of CXCR4 by ITCH and the subsequent endocytosis and desensitization of the receptor. Interacts with EPN1. Post-translationally, monoubiquitinated at Lys-274, Lys-329 and Lys-365 by ITCH. As to expression, prominently expressed in muscle.

It is found in the early endosome membrane. The protein resides in the late endosome membrane. It localises to the recycling endosome membrane. Its subcellular location is the cell membrane. In terms of biological role, functions as an activator of the E3 ubiquitin protein ligase ITCH in the ubiquitination of the CXCL12-activated CXCR4 receptor. Thereby, triggers CXCR4 endocytosis and desensitization, negatively regulating the CXCL12/CXCR4 signaling pathway. The protein is Endosomal transmembrane epsin interactor 1 of Homo sapiens (Human).